Consider the following 506-residue polypeptide: NADH-quinone oxidoreductase subunit N (506 aa).

14 helical membrane passes run 14–34 (MVPE…DLFF), 40–60 (YVAL…ITLY), 72–92 (FVLD…AALI), 109–129 (GEYY…ASSV), 131–151 (FVTL…LVGI), 166–186 (VING…LYGI), 209–229 (LLLA…IATV), 256–276 (MAGF…VSVQ), 286–306 (MSIY…VVAL), 314–334 (LFAY…VALS), 343–363 (FYML…HGLI), 385–405 (AIVM…AGFI), 420–440 (AHYV…VYYF), and 465–485 (IVMS…MIGY).

Belongs to the complex I subunit 2 family. In terms of assembly, NDH-1 is composed of 14 different subunits. Subunits NuoA, H, J, K, L, M, N constitute the membrane sector of the complex.

The protein localises to the cell membrane. It carries out the reaction a quinone + NADH + 5 H(+)(in) = a quinol + NAD(+) + 4 H(+)(out). Its function is as follows. NDH-1 shuttles electrons from NADH, via FMN and iron-sulfur (Fe-S) centers, to quinones in the respiratory chain. The immediate electron acceptor for the enzyme in this species is believed to be a menaquinone. Couples the redox reaction to proton translocation (for every two electrons transferred, four hydrogen ions are translocated across the cytoplasmic membrane), and thus conserves the redox energy in a proton gradient. The sequence is that of NADH-quinone oxidoreductase subunit N from Bacillus anthracis.